A 1553-amino-acid polypeptide reads, in one-letter code: Probable serine/threonine-protein kinase qkgA (1553 aa).

The tract at residues 113–142 (SSSSSSSSTSSSPSLTSSPSSPISTSPPYH) is disordered. LRR repeat units lie at residues 287–309 (NGTFLLLSKSNITRFPMSIINMC), 311–333 (QLVELDMSNNRITEIPIEITELK), 334–356 (FLKNLNLSDNLINDIPLEICNLT), and 357–378 (LLKVLLLNENPLNNFPSSIVEL). The Roc domain maps to 395 to 619 (SCETWNKVKL…KRLIHESEKS (225 aa)). 3 disordered regions span residues 643-696 (NQGR…QQQQ), 955-1019 (ISNS…PSSQ), and 1048-1090 (NQNG…NNNK). 4 stretches are compositionally biased toward low complexity: residues 648–675 (SISNSASNSSSSLLNSSSSSSPSLTSKK), 683–696 (SQQQQQQHQQQQQQ), 956–1018 (SNST…SPSS), and 1059–1090 (TTTTTSTSTSTTSTTTPTTTTPTIPIKNNNNK). In terms of domain architecture, COR spans 694–893 (QQQLQQSIKE…KTYWKDGVLL (200 aa)). The Protein kinase domain maps to 1242-1546 (ILYERQIGEG…QTSYFDSPFL (305 aa)). Residues 1248–1256 (IGEGGFGLI) and lysine 1271 contribute to the ATP site. Aspartate 1393 functions as the Proton acceptor in the catalytic mechanism.

The protein belongs to the protein kinase superfamily. TKL Ser/Thr protein kinase family. ROCO subfamily.

The catalysed reaction is L-seryl-[protein] + ATP = O-phospho-L-seryl-[protein] + ADP + H(+). The enzyme catalyses L-threonyl-[protein] + ATP = O-phospho-L-threonyl-[protein] + ADP + H(+). In terms of biological role, involved in growth, and during development, in aggregation. The polypeptide is Probable serine/threonine-protein kinase qkgA (qkgA-1) (Dictyostelium discoideum (Social amoeba)).